Reading from the N-terminus, the 231-residue chain is WAP four-disulfide core domain protein 3 (231 aa).

Positions 1–24 (MMLSCLFLLKALLALGSLESWITA) are cleaved as a signal peptide. WAP domains are found at residues 26–68 (EHAK…CRDI), 69–114 (PKGR…VVPI), 119–162 (LAEF…LGDI), and 163–207 (EGGR…VPPV). 16 disulfides stabilise this stretch: cysteine 33–cysteine 57, cysteine 40–cysteine 61, cysteine 44–cysteine 56, cysteine 50–cysteine 65, cysteine 76–cysteine 102, cysteine 85–cysteine 106, cysteine 89–cysteine 101, cysteine 95–cysteine 110, cysteine 126–cysteine 150, cysteine 133–cysteine 154, cysteine 137–cysteine 149, cysteine 143–cysteine 158, cysteine 170–cysteine 195, cysteine 178–cysteine 199, cysteine 182–cysteine 194, and cysteine 188–cysteine 203. The N-linked (GlcNAc...) asparagine glycan is linked to asparagine 107. Asparagine 217 is a glycosylation site (N-linked (GlcNAc...) asparagine).

As to expression, ubiquitously expressed.

It localises to the secreted. This is WAP four-disulfide core domain protein 3 (WFDC3) from Homo sapiens (Human).